The chain runs to 425 residues: MKDGKENSNATFGSFTTNLDHTKPCWYWDKKDLAHTPSQSDLDPATEARYRREGARFIFDVGTRLGLHYDTLATGITYFHRFYMFHSFKQFPRYVTGACCLFLAGKVEETPKKCKDIIKTARSLLNDVQFAQFGDDPKEEVMVLERILLQTIKFDLQVEHPYQFLLRYAKQLKGDKNKVQKLVQMAWTFVNDSLCTMLSLQWEPEIIAVAVMYLAGRLCKFDIQEWTSKQSSRRWWEQFVQDVPVELLEDICHQILDLYSQGKQPIPQQPPMQDKEKPPPPPAAPPGQSGAQNPPAQPPSKKNSPQASPPAKIKRQHVSPKDEPKAPAEQVGSKIPRLESPMPPLPVSQPPERKTPSAIPAPPAEAEPAAASELDPAQGPAPPLPHGAPPPLPHRPPPTEFGGPCSDFLSSVKHKRRYLDDDRNL.

The disordered stretch occupies residues 262–425 (GKQPIPQQPP…RRYLDDDRNL (164 aa)). Over residues 366–377 (AEPAAASELDPA) the composition is skewed to low complexity. The span at 379–399 (GPAPPLPHGAPPPLPHRPPPT) shows a compositional bias: pro residues.

It belongs to the cyclin family.

The protein resides in the nucleus. In terms of biological role, regulatory subunit of cyclin-dependent kinases that mediates activation of target kinases. Plays a role in transcriptional regulation via its role in regulating the phosphorylation of the C-terminal domain (CTD) of the large subunit of RNA polymerase II (POLR2A). The protein is Cyclin-K (ccnk) of Danio rerio (Zebrafish).